Here is a 491-residue protein sequence, read N- to C-terminus: COP9 signalosome complex subunit 1 (491 aa).

The PCI domain maps to 269–431; sequence CLLLASFDHC…KILYARDVDQ (163 aa). Positions 465–491 are disordered; sequence HVKSPPREGSQGELTPANSQSRMSTNM. 2 positions are modified to phosphoserine: serine 468 and serine 474. Positions 476-491 are enriched in polar residues; that stretch reads GELTPANSQSRMSTNM. Phosphothreonine is present on threonine 479. Phosphoserine is present on serine 483.

The protein belongs to the CSN1 family. As to quaternary structure, component of the CSN complex, composed of COPS1/GPS1, COPS2, COPS3, COPS4, COPS5, COPS6, COPS7 (COPS7A or COPS7B), COPS8 and COPS9 isoform 1. In the complex, it probably interacts directly with COPS2, COPS3, COPS4 and COPS5. Interacts directly with inositol kinase ITPK1. Interacts with CAPN8. Interacts with USP48. Interacts with ASB4; this interaction negatively regulates GPS1. In terms of tissue distribution, widely expressed.

The protein localises to the cytoplasm. Its subcellular location is the nucleus. Essential component of the COP9 signalosome complex (CSN), a complex involved in various cellular and developmental processes. The CSN complex is an essential regulator of the ubiquitin (Ubl) conjugation pathway by mediating the deneddylation of the cullin subunits of SCF-type E3 ligase complexes, leading to decrease the Ubl ligase activity of SCF-type complexes such as SCF, CSA or DDB2. The complex is also involved in phosphorylation of p53/TP53, c-jun/JUN, IkappaBalpha/NFKBIA, ITPK1 and IRF8/ICSBP, possibly via its association with CK2 and PKD kinases. CSN-dependent phosphorylation of TP53 and JUN promotes and protects degradation by the Ubl system, respectively. Suppresses G-protein- and mitogen-activated protein kinase-mediated signal transduction. The polypeptide is COP9 signalosome complex subunit 1 (GPS1) (Homo sapiens (Human)).